The sequence spans 494 residues: Alpha-amylase-related protein (494 aa).

A signal peptide spans 1-20; that stretch reads MIKFALALTLCLAGASLSLA. Pyrrolidone carboxylic acid is present on Q21. C48 and C104 are disulfide-bonded. Ca(2+) contacts are provided by N118, Q169, and D178. A disulfide bond links C157 and C171. R206 contributes to the chloride binding site. D208 (nucleophile) is an active-site residue. Position 212 (H212) interacts with Ca(2+). The active-site Proton donor is E245. Residues N308 and R343 each contribute to the chloride site. 3 disulfide bridges follow: C376–C382, C418–C441, and C448–C460.

This sequence belongs to the glycosyl hydrolase 13 family. As to quaternary structure, monomer. It depends on Ca(2+) as a cofactor. Chloride is required as a cofactor.

The protein resides in the secreted. It carries out the reaction Endohydrolysis of (1-&gt;4)-alpha-D-glucosidic linkages in polysaccharides containing three or more (1-&gt;4)-alpha-linked D-glucose units.. This chain is Alpha-amylase-related protein (Amyrel), found in Drosophila auraria (Fruit fly).